Reading from the N-terminus, the 503-residue chain is Na(+)-translocating NADH-quinone reductase subunit B (503 aa).

The next 5 helical transmembrane spans lie at 55–75, 94–114, 120–140, 161–181, and 186–206; these read MMLV…NSGL, ISGF…VPIL, IFIP…VLFA, TLPP…GIVV, and FGGT…FLFF. FMN phosphoryl threonine is present on threonine 248. 5 helical membrane passes run 361–381, 386–406, 417–437, 452–472, and 475–495; these read TSTF…IASW, AFGI…VLIV, FFIP…LVFM, WIYG…NPAY, and GVML…YFAV.

This sequence belongs to the NqrB/RnfD family. Composed of six subunits; NqrA, NqrB, NqrC, NqrD, NqrE and NqrF. FMN is required as a cofactor.

It is found in the cell inner membrane. It catalyses the reaction a ubiquinone + n Na(+)(in) + NADH + H(+) = a ubiquinol + n Na(+)(out) + NAD(+). Its function is as follows. NQR complex catalyzes the reduction of ubiquinone-1 to ubiquinol by two successive reactions, coupled with the transport of Na(+) ions from the cytoplasm to the periplasm. NqrA to NqrE are probably involved in the second step, the conversion of ubisemiquinone to ubiquinol. This Chlamydia pneumoniae (Chlamydophila pneumoniae) protein is Na(+)-translocating NADH-quinone reductase subunit B.